A 214-amino-acid chain; its full sequence is Large ribosomal subunit protein uL4c (214 aa).

The segment at 43–80 (KQSNEKRQGSANTKTRSEVRGGGRKPWRQKGTGRARAG) is disordered. Residues 64-75 (GGRKPWRQKGTG) show a composition bias toward basic residues.

It belongs to the universal ribosomal protein uL4 family. As to quaternary structure, part of the 50S ribosomal subunit.

The protein localises to the plastid. It is found in the chloroplast. Probably binds the 23S rRNA. The polypeptide is Large ribosomal subunit protein uL4c (rpl4) (Porphyra purpurea (Red seaweed)).